A 210-amino-acid chain; its full sequence is Protein GrpE (210 aa).

The interval 1–71 is disordered; sequence MSEKDQSVNN…DTKIKELEKL (71 aa). Positions 11 to 23 are enriched in acidic residues; that stretch reads TEEDFNVETEDNQ. A compositionally biased stretch (polar residues) spans 24–35; it reads NDTNIENSVSNT. Residues 36–46 are compositionally biased toward low complexity; the sequence is DNSEANASDSE. Residues 47–60 show a composition bias toward acidic residues; the sequence is NNSEESIKDEESES. Over residues 61-71 the composition is skewed to basic and acidic residues; sequence QDTKIKELEKL.

Belongs to the GrpE family. In terms of assembly, homodimer.

The protein localises to the cytoplasm. Its function is as follows. Participates actively in the response to hyperosmotic and heat shock by preventing the aggregation of stress-denatured proteins, in association with DnaK and GrpE. It is the nucleotide exchange factor for DnaK and may function as a thermosensor. Unfolded proteins bind initially to DnaJ; upon interaction with the DnaJ-bound protein, DnaK hydrolyzes its bound ATP, resulting in the formation of a stable complex. GrpE releases ADP from DnaK; ATP binding to DnaK triggers the release of the substrate protein, thus completing the reaction cycle. Several rounds of ATP-dependent interactions between DnaJ, DnaK and GrpE are required for fully efficient folding. In Staphylococcus epidermidis (strain ATCC 35984 / DSM 28319 / BCRC 17069 / CCUG 31568 / BM 3577 / RP62A), this protein is Protein GrpE.